Here is a 448-residue protein sequence, read N- to C-terminus: Beta-alanine--pyruvate aminotransferase (448 aa).

Trp61 serves as a coordination point for substrate. 120-121 is a binding site for pyridoxal 5'-phosphate; that stretch reads GS. The residue at position 288 (Lys288) is an N6-(pyridoxal phosphate)lysine. Thr327 contributes to the pyridoxal 5'-phosphate binding site. Arg414 and Gln421 together coordinate substrate.

Belongs to the class-III pyridoxal-phosphate-dependent aminotransferase family. Homotetramer. It depends on pyridoxal 5'-phosphate as a cofactor.

The catalysed reaction is 3-oxopropanoate + L-alanine = beta-alanine + pyruvate. With respect to regulation, inhibited by gabaculine (5-amino-1,3-cyclohexadienylcarboxylic acid). Its function is as follows. Involved in the degradation of beta-alanine. Catalyzes the transfer of the amino group from beta-alanine to pyruvate to yield L-alanine and 3-oxopropanoate. It can also accept both 4-aminobutyrate and (S)-alpha-methylbenzylamine (MBA) as amino-group donors in the presence of pyruvate as an amine acceptor. This chain is Beta-alanine--pyruvate aminotransferase (bauA), found in Pseudomonas aeruginosa (strain ATCC 15692 / DSM 22644 / CIP 104116 / JCM 14847 / LMG 12228 / 1C / PRS 101 / PAO1).